Here is a 341-residue protein sequence, read N- to C-terminus: Phosphoribosylformylglycinamidine cyclo-ligase (341 aa).

Belongs to the AIR synthase family.

It localises to the cytoplasm. It catalyses the reaction 2-formamido-N(1)-(5-O-phospho-beta-D-ribosyl)acetamidine + ATP = 5-amino-1-(5-phospho-beta-D-ribosyl)imidazole + ADP + phosphate + H(+). Its pathway is purine metabolism; IMP biosynthesis via de novo pathway; 5-amino-1-(5-phospho-D-ribosyl)imidazole from N(2)-formyl-N(1)-(5-phospho-D-ribosyl)glycinamide: step 2/2. The protein is Phosphoribosylformylglycinamidine cyclo-ligase of Xanthomonas axonopodis pv. citri (strain 306).